The chain runs to 219 residues: Dynein light chain Tctex-type 4 (219 aa).

Residues 1 to 84 (MACRTLPSRR…RRPSLGPVPP (84 aa)) form a disordered region. Positions 9–20 (RRQEEETTKDLA) are enriched in basic and acidic residues. Phosphoserine is present on S64.

The protein belongs to the dynein light chain Tctex-type family. Interacts with ENG/endoglin, TGFBR2 and TGFBR3. Interacts with PPP1CC.

The protein resides in the cell projection. Its subcellular location is the cilium. The protein localises to the flagellum. It localises to the cytoplasmic vesicle. It is found in the secretory vesicle. The protein resides in the acrosome. Its subcellular location is the cytoplasm. The protein localises to the cytoskeleton. It localises to the cilium axoneme. It is found in the nucleus. The protein resides in the microtubule organizing center. This Mus musculus (Mouse) protein is Dynein light chain Tctex-type 4 (Dynlt4).